The sequence spans 234 residues: Chalcone--flavanone isomerase 2 (234 aa).

Residues Thr50, Asn115, and Ser192 each contribute to the substrate site.

The protein belongs to the chalcone isomerase family.

The enzyme catalyses a chalcone = a flavanone.. The protein operates within secondary metabolite biosynthesis; flavonoid biosynthesis. Functionally, catalyzes the intramolecular cyclization of bicyclic chalcones into tricyclic (S)-flavanones. Responsible for the isomerization of 4,2',4',6'-tetrahydroxychalcone (also termed chalcone) into naringenin. The protein is Chalcone--flavanone isomerase 2 (CHI2) of Vitis vinifera (Grape).